The sequence spans 64 residues: Ferredoxin-like protein in nif region (64 aa).

The 29-residue stretch at 2–30 folds into the 4Fe-4S ferredoxin-type domain; sequence AFKIIASQCTQCGACEFECPSNAIELKGE. 8 residues coordinate [4Fe-4S] cluster: C10, C13, C16, C20, C39, C42, C51, and C55.

The cofactor is [4Fe-4S] cluster.

This chain is Ferredoxin-like protein in nif region (fdxN), found in Sinorhizobium fredii (strain NBRC 101917 / NGR234).